Here is a 336-residue protein sequence, read N- to C-terminus: Glutamyl endopeptidase (336 aa).

Residues 1 to 29 (MKGKFLKVSSLFVATLTTATLVSSPAANA) form the signal peptide. The propeptide occupies 30–68 (LSSKAMDNHPQQTQSSKQQTPKIQKGGNLKPLEQREHAN). Residues 34-61 (AMDNHPQQTQSSKQQTPKIQKGGNLKPL) are disordered. Residues 39 to 51 (PQQTQSSKQQTPK) are compositionally biased toward low complexity. Active-site charge relay system residues include H119, D161, and S237. Residues 283 to 336 (FANDDQPNNPDNPDNPNNPDNPNNPDEPNNPDNPNNPDNPDNGDNNNSDNPDAA) form a disordered region. Over residues 286–336 (DDQPNNPDNPDNPNNPDNPNNPDEPNNPDNPNNPDNPDNGDNNNSDNPDAA) the composition is skewed to low complexity. 11 repeat units span residues 289–291 (PNN), 292–294 (PDN), 295–297 (PDN), 298–300 (PNN), 301–303 (PDN), 304–306 (PNN), 310–312 (PNN), 313–315 (PDN), 316–318 (PNN), 319–321 (PDN), and 322–324 (PDN). The 11 X 3 AA repeats of P-[DN]-N stretch occupies residues 289–324 (PNNPDNPDNPNNPDNPNNPDEPNNPDNPNNPDNPDN).

The protein belongs to the peptidase S1B family. Proteolytically cleaved by aureolysin (aur). This cleavage leads to the activation of SspA.

Its subcellular location is the secreted. It catalyses the reaction Preferential cleavage: Glu-|-Xaa, Asp-|-Xaa.. In terms of biological role, preferentially cleaves peptide bonds on the carboxyl-terminal side of aspartate and glutamate. Along with other extracellular proteases it is involved in colonization and infection of human tissues. Required for proteolytic maturation of thiol protease SspB and inactivation of SspC, an inhibitor of SspB. It is the most important protease for degradation of fibronectin-binding protein (FnBP) and surface protein A, which are involved in adherence to host cells. May also protect bacteria against host defense mechanism by cleaving the immunoglobulin classes IgG, IgA and IgM. May be involved in the stability of secreted lipases. This chain is Glutamyl endopeptidase (sspA), found in Staphylococcus aureus (strain NCTC 8325 / PS 47).